The chain runs to 185 residues: Peptidyl-tRNA hydrolase (185 aa).

Position 14 (Tyr-14) interacts with tRNA. His-19 functions as the Proton acceptor in the catalytic mechanism. Residues Tyr-65, Asn-67, and Asn-113 each contribute to the tRNA site.

This sequence belongs to the PTH family. Monomer.

It localises to the cytoplasm. It carries out the reaction an N-acyl-L-alpha-aminoacyl-tRNA + H2O = an N-acyl-L-amino acid + a tRNA + H(+). Its function is as follows. Hydrolyzes ribosome-free peptidyl-tRNAs (with 1 or more amino acids incorporated), which drop off the ribosome during protein synthesis, or as a result of ribosome stalling. Functionally, catalyzes the release of premature peptidyl moieties from peptidyl-tRNA molecules trapped in stalled 50S ribosomal subunits, and thus maintains levels of free tRNAs and 50S ribosomes. The protein is Peptidyl-tRNA hydrolase of Rickettsia conorii (strain ATCC VR-613 / Malish 7).